Reading from the N-terminus, the 142-residue chain is Arginine decarboxylase proenzyme (142 aa).

Catalysis depends on Ser81, which acts as the Schiff-base intermediate with substrate; via pyruvic acid. Ser81 carries the pyruvic acid (Ser); by autocatalysis modification. Catalysis depends on His86, which acts as the Proton acceptor; for processing activity. Cys101 serves as the catalytic Proton donor; for catalytic activity.

The protein belongs to the prokaryotic AdoMetDC family. Type 1 subfamily. In terms of assembly, heterooctamer of four alpha and four beta chains arranged as a tetramer of alpha/beta heterodimers. It depends on pyruvate as a cofactor. Post-translationally, is synthesized initially as an inactive proenzyme. Formation of the active enzyme involves a self-maturation process in which the active site pyruvoyl group is generated from an internal serine residue via an autocatalytic post-translational modification. Two non-identical subunits are generated from the proenzyme in this reaction, and the pyruvate is formed at the N-terminus of the alpha chain, which is derived from the carboxyl end of the proenzyme. The post-translation cleavage follows an unusual pathway, termed non-hydrolytic serinolysis, in which the side chain hydroxyl group of the serine supplies its oxygen atom to form the C-terminus of the beta chain, while the remainder of the serine residue undergoes an oxidative deamination to produce ammonia and the pyruvoyl group blocking the N-terminus of the alpha chain.

It carries out the reaction L-arginine + H(+) = agmatine + CO2. It functions in the pathway amine and polyamine biosynthesis; agmatine biosynthesis; agmatine from L-arginine: step 1/1. Its function is as follows. Specifically catalyzes the decarboxylation of L-arginine to agmatine. Has no S-adenosylmethionine decarboxylase (AdoMetDC) activity. This chain is Arginine decarboxylase proenzyme, found in Hyperthermus butylicus (strain DSM 5456 / JCM 9403 / PLM1-5).